The primary structure comprises 345 residues: N-acetyl-gamma-glutamyl-phosphate reductase (345 aa).

Cys149 is an active-site residue.

The protein belongs to the NAGSA dehydrogenase family. Type 1 subfamily.

The protein localises to the cytoplasm. The catalysed reaction is N-acetyl-L-glutamate 5-semialdehyde + phosphate + NADP(+) = N-acetyl-L-glutamyl 5-phosphate + NADPH + H(+). Its pathway is amino-acid biosynthesis; L-arginine biosynthesis; N(2)-acetyl-L-ornithine from L-glutamate: step 3/4. Functionally, catalyzes the NADPH-dependent reduction of N-acetyl-5-glutamyl phosphate to yield N-acetyl-L-glutamate 5-semialdehyde. The sequence is that of N-acetyl-gamma-glutamyl-phosphate reductase from Bacillus cereus (strain ATCC 10987 / NRS 248).